We begin with the raw amino-acid sequence, 30 residues long: Thylakoid lumenal 17 kDa protein (30 aa).

The protein resides in the plastid. The protein localises to the chloroplast thylakoid lumen. This Spinacia oleracea (Spinach) protein is Thylakoid lumenal 17 kDa protein.